The following is a 598-amino-acid chain: UvrABC system protein C (598 aa).

One can recognise a GIY-YIG domain in the interval 14-91 (DQPGCYLMKD…IHKNNPKYNI (78 aa)). The UVR domain occupies 196 to 231 (TEIQDRLQEKMAYAAAHMEFEKAAEFRDQIKAIETV).

It belongs to the UvrC family. Interacts with UvrB in an incision complex.

It is found in the cytoplasm. In terms of biological role, the UvrABC repair system catalyzes the recognition and processing of DNA lesions. UvrC both incises the 5' and 3' sides of the lesion. The N-terminal half is responsible for the 3' incision and the C-terminal half is responsible for the 5' incision. The chain is UvrABC system protein C from Enterococcus faecalis (strain ATCC 700802 / V583).